The following is a 201-amino-acid chain: NADH-quinone oxidoreductase subunit C (201 aa).

It belongs to the complex I 30 kDa subunit family. As to quaternary structure, NDH-1 is composed of 14 different subunits. Subunits NuoB, C, D, E, F, and G constitute the peripheral sector of the complex.

The protein localises to the cell inner membrane. It catalyses the reaction a quinone + NADH + 5 H(+)(in) = a quinol + NAD(+) + 4 H(+)(out). In terms of biological role, NDH-1 shuttles electrons from NADH, via FMN and iron-sulfur (Fe-S) centers, to quinones in the respiratory chain. The immediate electron acceptor for the enzyme in this species is believed to be ubiquinone. Couples the redox reaction to proton translocation (for every two electrons transferred, four hydrogen ions are translocated across the cytoplasmic membrane), and thus conserves the redox energy in a proton gradient. This is NADH-quinone oxidoreductase subunit C from Sinorhizobium medicae (strain WSM419) (Ensifer medicae).